The primary structure comprises 452 residues: Pup--protein ligase (452 aa).

Glutamate 9 contacts Mg(2+). ATP is bound at residue arginine 53. Tyrosine 55 contributes to the Mg(2+) binding site. Aspartate 57 serves as the catalytic Proton acceptor. Mg(2+) is bound at residue glutamate 63. Residues threonine 66 and tryptophan 419 each coordinate ATP.

Belongs to the Pup ligase/Pup deamidase family. Pup-conjugating enzyme subfamily.

It catalyses the reaction ATP + [prokaryotic ubiquitin-like protein]-L-glutamate + [protein]-L-lysine = ADP + phosphate + N(6)-([prokaryotic ubiquitin-like protein]-gamma-L-glutamyl)-[protein]-L-lysine.. It functions in the pathway protein degradation; proteasomal Pup-dependent pathway. Its pathway is protein modification; protein pupylation. In terms of biological role, catalyzes the covalent attachment of the prokaryotic ubiquitin-like protein modifier Pup to the proteasomal substrate proteins, thereby targeting them for proteasomal degradation. This tagging system is termed pupylation. The ligation reaction involves the side-chain carboxylate of the C-terminal glutamate of Pup and the side-chain amino group of a substrate lysine. The sequence is that of Pup--protein ligase from Nocardia farcinica (strain IFM 10152).